We begin with the raw amino-acid sequence, 270 residues long: Thiazole synthase (270 aa).

Lys111 functions as the Schiff-base intermediate with DXP in the catalytic mechanism. 1-deoxy-D-xylulose 5-phosphate-binding positions include Gly172, Ala198–Gly199, and Asn220–Thr221.

It belongs to the ThiG family. In terms of assembly, homotetramer. Forms heterodimers with either ThiH or ThiS.

The protein resides in the cytoplasm. It carries out the reaction [ThiS sulfur-carrier protein]-C-terminal-Gly-aminoethanethioate + 2-iminoacetate + 1-deoxy-D-xylulose 5-phosphate = [ThiS sulfur-carrier protein]-C-terminal Gly-Gly + 2-[(2R,5Z)-2-carboxy-4-methylthiazol-5(2H)-ylidene]ethyl phosphate + 2 H2O + H(+). It participates in cofactor biosynthesis; thiamine diphosphate biosynthesis. Catalyzes the rearrangement of 1-deoxy-D-xylulose 5-phosphate (DXP) to produce the thiazole phosphate moiety of thiamine. Sulfur is provided by the thiocarboxylate moiety of the carrier protein ThiS. In vitro, sulfur can be provided by H(2)S. The sequence is that of Thiazole synthase from Methylococcus capsulatus (strain ATCC 33009 / NCIMB 11132 / Bath).